We begin with the raw amino-acid sequence, 1315 residues long: MDSQGLKTLINYYCQERYYHHVLLVASEGMKKYSSDPVFRFYHAYGTLMEGKAQEALREFEAIKNKQDVSLCSLMALMYVHKMSPNPDREAILELDTKMKEQRKEAGRKALYHAGLFLWHIGRHDKAREYIDRMSKMPHDSNEGPILKAWLDITRGKEPYAKKALRYFEEGLQDGNDIFALLGKVLCLEIRQNYSGALETVSQIIVNFPSFLPAFEKKMKLQLALQDWDQTVETAQRLLLQDNHNVEALRMLALYYLCREGDVEKAATKLENLGNALDVMEPQNAQLFYKITLAFSRTCGRNQLILQKVQSFLEKAFSLTPQQAEIATELGYQMILQGKVKEAWKWYRTAMTLNESNISAVTGLIRCQLIEGQLQDADQQLEFFSEFQQSMGKSAELMYLHAVLATKKNNRQDEVINLLNDVVNTHFSHLEDLPLGIQYFEKLNPDFLLEVVTEYLNLCPIQPAGPGQPLSPVLRRCSSVLETIIRSVPGLPQAVFLMAKVKYLSGDTEAAYNNLQHCLEHSPSYAEAHLLMAQVYLSQDKVKLCSQSLELCLSYNFNVREYPLYHLIKAQSQKKMGEVAEAIKTLHMAMNLPGMRRSRASSKSKHRTEVDASHRLSIFLELVEVHRLNGEQHEAAKVLQDAIHEFSGTCEELRVTIANADLALAQGDTDRALSMLRNVTTEQPYFIEAKEKMADIYLKHRKEKMLYITCYREIAERMPSPRSFLLLGDAYMNIQEPEEAIVAYEQALNQNPKDGTLARKIGKALVKTHNYSKAITYYEAALKSGQQNCLCYDLAELLLRLKLYEKAEKVLQHSLAHEPVSELSALMVDGRSQVLLAKVYSKMERPSDAIAALQQARELQARILKRVQMEQPDAVPSQKHFAAEICAEIAKHSAAQRDYEKAITFYREALVHCETDSKIMLELAQLYLAQEDLDASLRHCALLLQRDQDNEPATMLMADLMFRKQDYEQAVYHLQQLLDRKPDNFMTLSRLIDLLRRCGKLEDVPRFFLMAEKHNSRTKLEPGFQYCKGLHFWYTGEPNDALRHFNKARKDSDWGQNALYNMIEICLNPDNETIGGEVFENLNGDLGTSPEKQESVQLAVRTAEKLLKELKPQTVQGRLQLRIMENCCLMATKQKSSVEQALNTFTEIAASEKDHIPALLGMATAYMILKQTPKARNQLKRIAKMPWNPIEAEDLEKSWLLLADIYIQSAKYDMAEELLKRCLCHNRSCCKAYEYMGYIMEKEQAYTDAAFNYEMAWKHSNQTNPAVGYKLAFNYLKAKRYVDAIDVCHQVLEAHPTYPKIRKDILDKARASLRP.

19 TPR repeats span residues 108-141, 145-178, 192-225, 285-323, 324-357, 492-525, 563-596, 616-649, 721-754, 756-788, 790-821, 830-863, 883-916, 918-950, 951-984, 1022-1055, 1196-1229, 1231-1263, and 1265-1298; these read RKAL…PHDS, PILK…GNDI, QNYS…QLAL, AQLF…TPQQ, AEIA…NESN, PQAV…SPSY, PLYH…PGMR, LSIF…FSGT, PRSF…NPKD, TLAR…GQQN, LCYD…EPVS, GRSQ…QARI, AEIC…CETD, KIML…DQDN, EPAT…KPDN, PGFQ…SDWG, EKSW…NRSC, KAYE…SNQT, and PAVG…HPTY.

This sequence belongs to the TTC21 family. In terms of assembly, component of the IFT complex A (IFT-A) complex. IFT-A complex is divided into a core subcomplex composed of IFT122:IFT140:WDR19 which is associated with TULP3 and a peripheral subcomplex composed of IFT43:WDR35:TTC21B. Interacts directy with WDR35 and TTC21B. Interacts with TTC25.

The protein resides in the cytoplasm. Its subcellular location is the cytoskeleton. It is found in the cilium axoneme. Its function is as follows. Component of the IFT complex A (IFT-A), a complex required for retrograde ciliary transport and entry into cilia of G protein-coupled receptors (GPCRs). Essential for retrograde trafficking of IFT-1, IFT-B and GPCRs. Negatively modulates the SHH signal transduction. This chain is Tetratricopeptide repeat protein 21B (Ttc21b), found in Mus musculus (Mouse).